Here is a 397-residue protein sequence, read N- to C-terminus: Chorismate synthase (397 aa).

NADP(+)-binding residues include Arg-40 and Arg-46. FMN is bound by residues 129 to 131 (RAS), 257 to 258 (QA), Gly-302, 317 to 321 (KPIAT), and Arg-343.

This sequence belongs to the chorismate synthase family. As to quaternary structure, homotetramer. FMNH2 serves as cofactor.

The enzyme catalyses 5-O-(1-carboxyvinyl)-3-phosphoshikimate = chorismate + phosphate. The protein operates within metabolic intermediate biosynthesis; chorismate biosynthesis; chorismate from D-erythrose 4-phosphate and phosphoenolpyruvate: step 7/7. Functionally, catalyzes the anti-1,4-elimination of the C-3 phosphate and the C-6 proR hydrogen from 5-enolpyruvylshikimate-3-phosphate (EPSP) to yield chorismate, which is the branch point compound that serves as the starting substrate for the three terminal pathways of aromatic amino acid biosynthesis. This reaction introduces a second double bond into the aromatic ring system. In Prosthecochloris aestuarii (strain DSM 271 / SK 413), this protein is Chorismate synthase.